We begin with the raw amino-acid sequence, 425 residues long: Glutamate-1-semialdehyde 2,1-aminomutase (425 aa).

Lysine 265 carries the post-translational modification N6-(pyridoxal phosphate)lysine.

This sequence belongs to the class-III pyridoxal-phosphate-dependent aminotransferase family. HemL subfamily. Homodimer. The cofactor is pyridoxal 5'-phosphate.

The protein resides in the cytoplasm. The catalysed reaction is (S)-4-amino-5-oxopentanoate = 5-aminolevulinate. It participates in porphyrin-containing compound metabolism; protoporphyrin-IX biosynthesis; 5-aminolevulinate from L-glutamyl-tRNA(Glu): step 2/2. This Chromobacterium violaceum (strain ATCC 12472 / DSM 30191 / JCM 1249 / CCUG 213 / NBRC 12614 / NCIMB 9131 / NCTC 9757 / MK) protein is Glutamate-1-semialdehyde 2,1-aminomutase.